Consider the following 416-residue polypeptide: 4-hydroxy-3-methylbut-2-en-1-yl diphosphate synthase (flavodoxin) (416 aa).

The [4Fe-4S] cluster site is built by cysteine 304, cysteine 307, cysteine 350, and glutamate 357.

This sequence belongs to the IspG family. The cofactor is [4Fe-4S] cluster.

It carries out the reaction (2E)-4-hydroxy-3-methylbut-2-enyl diphosphate + oxidized [flavodoxin] + H2O + 2 H(+) = 2-C-methyl-D-erythritol 2,4-cyclic diphosphate + reduced [flavodoxin]. It participates in isoprenoid biosynthesis; isopentenyl diphosphate biosynthesis via DXP pathway; isopentenyl diphosphate from 1-deoxy-D-xylulose 5-phosphate: step 5/6. In terms of biological role, converts 2C-methyl-D-erythritol 2,4-cyclodiphosphate (ME-2,4cPP) into 1-hydroxy-2-methyl-2-(E)-butenyl 4-diphosphate. This is 4-hydroxy-3-methylbut-2-en-1-yl diphosphate synthase (flavodoxin) from Rhizobium leguminosarum bv. trifolii (strain WSM2304).